The primary structure comprises 112 residues: Protein preY, mitochondrial (112 aa).

The transit peptide at 1 to 34 (MLTTTCRRLSQALQRPHALSAVAQRCLRAPGARS) directs the protein to the mitochondrion. Positions 49 to 95 (HPALLQFLVCPLSKKPLRYDASTNELINDELGIAYPIIDGVPNMIPQ) constitute a TRM112 domain.

The protein belongs to the PREY family. Interacts (via TRM112 domain) with NDUFAF5; the interaction is direct and stabilizes NDUFAF5 protein. Interacts with COQ5; the interaction is direct, stabilizes COQ5 protein and associates PYURF with COQ enzyme complex.

The protein localises to the mitochondrion. Functionally, in mitochondria, S-adenosylmethionine-dependent methyltransferase chaperone that supports both coenzyme Q biosynthesis, by stabilizing its components, such as COQ5, and NADH:ubiquinone oxidoreductase complex (complex I, MT-ND1) assembly, by stabilizing complex I assembly factors, such as NDUFAF5. The protein is Protein preY, mitochondrial (Pyurf) of Rattus norvegicus (Rat).